A 226-amino-acid chain; its full sequence is Late expression factor 7 (226 aa).

The F-box domain maps to 9-58; it reads RAKRIRLPLEIIDTILQYLDPILHAKVVGLTTRVKCRLLRDNNVEDYLKL.

Interacts with host S-phase kinase-associated protein 1/SKP1.

The protein resides in the host nucleus. Its pathway is protein degradation; proteasomal ubiquitin-dependent pathway. Functionally, F-box protein that manipulates the host DNA damage response (DRR) in order to promote viral multiplication. Acts as a substrate recognition component of SKP1/Cullin/F-box (SCF) complexes for targeted protein polyubiquitination. The sequence is that of Late expression factor 7 (LEF-7) from Lepidoptera (butterflies and moths).